Reading from the N-terminus, the 130-residue chain is Small ribosomal subunit protein uS11 (130 aa).

This sequence belongs to the universal ribosomal protein uS11 family. As to quaternary structure, part of the 30S ribosomal subunit. Interacts with proteins S7 and S18. Binds to IF-3.

Functionally, located on the platform of the 30S subunit, it bridges several disparate RNA helices of the 16S rRNA. Forms part of the Shine-Dalgarno cleft in the 70S ribosome. The sequence is that of Small ribosomal subunit protein uS11 from Xylella fastidiosa (strain 9a5c).